Reading from the N-terminus, the 503-residue chain is MEEFQGYLELDRSQQHDFLYPLIFREYIYALAHDRGLNRSVLLDNVGYDKKSSLLIIKRLISRMYQQNHFLISVNDSNQNRFLGYNKNLYSQMISEVFAVIVEIPFSLRLVSSLEETEIVKSYNLRSIHSIFPFFEDKFPHLNYASDVLIPYPIHLEILVQNLRYCVKDPSSLHLLRLFLHEYYNWNSLITPQKSIFAKSNPRLFLLLYNSYVCEYESILLFLRNQSNHLRLTSSGIFFERICFYEKIKYPVEEVLANDFPATLWFFKDPFMQYVRYRGKSILASKETPLLMNKWKYYLVNFWQCNFYVWSQPGRIHINQLSKHSLDFLGYLSSIRPNISVVRSQLLENSFLMDNAMKKLDTLVPIIPMIGSLAKVKFCNTLGHPISKSTWADSSDSDIIDRFVRIGGNLFHYYSGSSKKKSLYRIKYILRLSCVKTLARKHKSTVRTFLKRLGPKLLDEFFTEEEQIFSLLFPRASSILKRFYRGRIWYLDILCINDLVNHE.

It belongs to the intron maturase 2 family. MatK subfamily.

It is found in the plastid. It localises to the chloroplast. Functionally, usually encoded in the trnK tRNA gene intron. Probably assists in splicing its own and other chloroplast group II introns. The sequence is that of Maturase K from Rubus ursinus (California blackberry).